A 432-amino-acid chain; its full sequence is Putative D-alanyl-D-alanine carboxypeptidase (432 aa).

The chain crosses the membrane as a helical; Signal-anchor span at residues 7-25 (ATVLLTFSLSAFAVEYPVL).

It belongs to the peptidase S12 family. YfeW subfamily.

The protein localises to the cell inner membrane. It catalyses the reaction Preferential cleavage: (Ac)2-L-Lys-D-Ala-|-D-Ala. Also transpeptidation of peptidyl-alanyl moieties that are N-acyl substituents of D-alanine.. The sequence is that of Putative D-alanyl-D-alanine carboxypeptidase from Salmonella agona (strain SL483).